A 403-amino-acid chain; its full sequence is RNA-binding motif, single-stranded-interacting protein 1 (403 aa).

The interval Pro30–Trp56 is disordered. Residues Ser40–Ser54 show a composition bias toward low complexity. 2 consecutive RRM domains span residues Thr62–Gln135 and Thr141–Gly226. A Phosphothreonine modification is found at Thr208.

The protein localises to the nucleus. Functionally, single-stranded DNA binding protein that interacts with the region upstream of the MYC gene. Binds specifically to the DNA sequence motif 5'-[AT]CT[AT][AT]T-3'. Probably has a role in DNA replication. The polypeptide is RNA-binding motif, single-stranded-interacting protein 1 (Rattus norvegicus (Rat)).